Here is a 378-residue protein sequence, read N- to C-terminus: MTLSINDQNKLDAFWAYCVKNQYFNIGYPESADFDYTNLERFLRFSINNCGDWGEYCNYLLNSFDFEKEVMEYFADLFKIPFEQSWGYVTNGGTEGNMFGCYLGREIFPDGTLYYSKDTHYSVAKIVKLLRIKSQVVESQPNGEIDYDDLMKKIADDKEAHPIIFANIGTTVRGAIDDIAEIQKRLKAAGIKREDYYLHADAALSGMILPFVDDAQPFTFADGIDSIGVSGHKMIGSPIPCGIVVAKKENVDRISVEIDYISAHDKTITGSRNGHTPLMLWEAIRSHSTEEWKRRITRSLDMAQYAVDRMQKAGINAWRNKNSITVVFPCPSERVWREHCLATSGDVAHLITTAHHLDTVQIDKLIDDVIADFNLHAA.

A substrate-binding site is contributed by histidine 120. An N6-(pyridoxal phosphate)lysine modification is found at lysine 233. Serine 323 is a catalytic residue.

The protein belongs to the group II decarboxylase family. As to quaternary structure, homotetramer. Pyridoxal 5'-phosphate is required as a cofactor.

It carries out the reaction L-histidine + H(+) = histamine + CO2. In Morganella morganii (Proteus morganii), this protein is Histidine decarboxylase (hdc).